Here is a 185-residue protein sequence, read N- to C-terminus: Putative F-box protein At3g17400 (185 aa).

The 47-residue stretch at Met-1–His-47 folds into the F-box domain.

The chain is Putative F-box protein At3g17400 from Arabidopsis thaliana (Mouse-ear cress).